Here is a 210-residue protein sequence, read N- to C-terminus: MNHLKSFFTALVAGFILTACSSLDISDTRPADVKTIDKSDIQWQQHLKQIKQIQHYSSQGQIGYISSKERFSSRFEWNYAAPTDYTLKLYSTISSTSLVMQMHNTGMTISDNKGNRRSEADAKALVREIIGMDVPLEQFAYWLKGQPDEKADYQVGENHYLASFTYPLDGTVWSADYLNYHEEKQPALPKDILLKNANQTLKIRVDNWTF.

The signal sequence occupies residues M1 to A19. C20 is lipidated: N-palmitoyl cysteine. A lipid anchor (S-diacylglycerol cysteine) is attached at C20.

This sequence belongs to the LolB family. Monomer.

The protein localises to the cell outer membrane. Functionally, plays a critical role in the incorporation of lipoproteins in the outer membrane after they are released by the LolA protein. The chain is Outer-membrane lipoprotein LolB from Mannheimia succiniciproducens (strain KCTC 0769BP / MBEL55E).